The sequence spans 343 residues: Major histocompatibility complex class I-related protein 1 (343 aa).

Residues 1–18 form the signal peptide; it reads MMFLLPFLTVFLAKQSHT. The alpha-1 stretch occupies residues 19-105; the sequence is RTHSLRYFRL…RHLQRHYNHS (87 aa). Residues 19–197 form an antigen-binding cleft region; the sequence is RTHSLRYFRL…EYGSDALERT (179 aa). The Extracellular portion of the chain corresponds to 19–298; sequence RTHSLRYFRL…QESGNTLLVA (280 aa). 8-(9H-purin-6-yl)-2-oxa-8-azabicyclo[3.3.1]nona-3,6-diene-4,6-dicarbaldehyde contacts are provided by Y25 and R27. 5-(2-oxoethylideneamino)-6-(D-ribitylamino)uracil is bound by residues R27, S42, and K61. 5-(2-oxopropylideneamino)-6-(D-ribitylamino)uracil is bound by residues R27, S42, and K61. Residues R27, S42, and K61 each contribute to the 7-hydroxy-6-methyl-8-(1-D-ribityl)lumazine site. 8-(9H-purin-6-yl)-2-oxa-8-azabicyclo[3.3.1]nona-3,6-diene-4,6-dicarbaldehyde-binding residues include K61 and H76. Residue K61 coordinates 2-amino-4-oxopteridine-6-carbaldehyde. Position 61 (K61) interacts with pyridoxal. N103 carries N-linked (GlcNAc...) asparagine glycosylation. The interval 106–197 is alpha-2; the sequence is GLHTYQRMIG…EYGSDALERT (92 aa). R112 contributes to the 8-(9H-purin-6-yl)-2-oxa-8-azabicyclo[3.3.1]nona-3,6-diene-4,6-dicarbaldehyde binding site. R112, Y170, and Q171 together coordinate 5-(2-oxoethylideneamino)-6-(D-ribitylamino)uracil. 5-(2-oxopropylideneamino)-6-(D-ribitylamino)uracil contacts are provided by R112, Y170, and Q171. 7-hydroxy-6-methyl-8-(1-D-ribityl)lumazine is bound by residues R112, Y170, and Q171. 2 disulfides stabilise this stretch: C116/C179 and C218/C274. Residues 198 to 289 are alpha-3; that stretch reads EHPVVRTTRK…GLQMVLEAPQ (92 aa). The 103-residue stretch at 200 to 302 folds into the Ig-like C1-type domain; sequence PVVRTTRKET…NTLLVANTIS (103 aa). The connecting peptide stretch occupies residues 290 to 298; the sequence is ESGNTLLVA. Residues 299 to 319 traverse the membrane as a helical segment; sequence NTISGTIILIIVLAGVGALIW. Over 320 to 343 the chain is Cytoplasmic; sequence RRRSREPKEVMYQPTQVNEGSSPS.

In terms of assembly, heterotrimer that consists of MR1, B2M and metabolite antigen. Major classes of metabolite ligands presented by MR1 include riboflavin-related antigens, pyrimidines and ribityl lumazines, nucleobase adducts and folate derivatives. Forms reversible covalent Schiff base complexes with microbial pyrimidine-based metabolite, which serves as a molecular switch triggering complete folding, stable association with B2M and translocation of the ternary complex from endoplasmic reticulum to the plasma membrane. Alternatively, forms non-Schiff base complexes with ribityl lumazines. On antigen-presenting cells, the ternary complex interacts with TCR on MR1-restricted T cells. Interacts with TAPBP and TAPBPL chaperones in the endoplasmic reticulum. TAPBP associated or not with MHC class I peptide loading complex binds ligand-free MR1 or MR1-B2M complex, providing for stable MR1 pools ready for metabolite antigen processing. TAPBPL interacts with MR1 in a ligand-independent way; this interaction may stabilize MR1 pool and facilitate ligand loading and dissociation. Structurally, MR1-B2M heterodimer adopts a topology similar to classical MHC class I molecules, with alpha-1 and alpha-2 domains of MR1 forming the antigen-binding cleft composed of two alpha-helices resting on a floor of 7-stranded anti-parallel beta-pleated sheet. MR1-B2M heterodimer (via alpha-helices) interacts with TCR (via CDR domains). In terms of processing, N-glycosylated. In terms of tissue distribution, expressed in kidney, liver, testis, spleen, thymus, brain, and heart.

It localises to the cell membrane. The protein resides in the endoplasmic reticulum membrane. Its subcellular location is the golgi apparatus membrane. The protein localises to the early endosome membrane. It is found in the late endosome membrane. Antigen-presenting molecule specialized in displaying microbial pyrimidine-based metabolites to alpha-beta T cell receptors (TCR) on innate-type mucosal-associated invariant T (MAIT) cells. In complex with B2M preferentially presents riboflavin-derived metabolites to semi-invariant TCRs on MAIT cells, guiding immune surveillance of the microbial metabolome at mucosal epithelial barriers. Signature pyrimidine-based microbial antigens are generated via non-enzymatic condensation of metabolite intermediates of the riboflavin pathway with by-products arising from other metabolic pathways such as glycolysis. Typical potent antigenic metabolites are 5-(2-oxoethylideneamino)-6-D-ribitylaminouracil (5-OE-RU) and 5-(2-oxopropylideneamino)-6-D-ribitylaminouracil (5-OP-RU), products of condensation of 5-amino-6-D-ribityaminouracil (5-A-RU) with glyoxal or methylglyoxal by-products, respectively. May present microbial antigens to various MAIT cell subsets, providing for unique recognition of diverse microbes, including pathogens that do not synthesize riboflavin. Upon antigen recognition, elicits rapid innate-type MAIT cell activation to eliminate pathogenic microbes by directly killing infected cells. During T cell development, drives thymic selection and post-thymic terminal differentiation of MAIT cells in a process dependent on commensal microflora. Acts as an immune sensor of cancer cell metabolome. May present a tumor-specific or -associated metabolite essential for cancer cell survival to a pan-cancer TCR on a non-MAIT CD8-positive T cell clone, triggering T cell-mediated killing of a wide range of cancer cell types. May present tumor-enriched pyridoxal and pyridoxal 5'-phosphate antigens, enabling preferential recognition of cancer cells. Presents nucleobase carbonyl adducts generated during oxidative stress. Captures M3Ade, a nucleobase adduct composed of one adenine modified by a malondialdehyde trimer, for recognition by MR1-restricted T cell clones expressing a polyclonal TCR repertoire. This Rattus norvegicus (Rat) protein is Major histocompatibility complex class I-related protein 1.